Here is a 206-residue protein sequence, read N- to C-terminus: Small ribosomal subunit protein uS4A (206 aa).

Residues 98–163 form the S4 RNA-binding domain; that stretch reads MRLDNVVYRL…SERFKMFAEN (66 aa).

This sequence belongs to the universal ribosomal protein uS4 family. As to quaternary structure, part of the 30S ribosomal subunit. Contacts protein S5. The interaction surface between S4 and S5 is involved in control of translational fidelity.

In terms of biological role, one of the primary rRNA binding proteins, it binds directly to 16S rRNA where it nucleates assembly of the body of the 30S subunit. Its function is as follows. With S5 and S12 plays an important role in translational accuracy. This is Small ribosomal subunit protein uS4A from Clostridium perfringens (strain SM101 / Type A).